A 250-amino-acid polypeptide reads, in one-letter code: MSEKQTFADKKRKTVEQAEFTEDGRYLRKVRSFVLRTGRLSDYQRDMMNNNWANLGLDYQNTPFNFEQIFGNNNPVVLEIGFGMGRSLVEMAKQNPDRNYIGIEVHTPGVGACIAYALEKGVKNLRVICHDATEILRDAIADGSLGGLQLYFPDPWQKAKHHKRRIVQPEFITRVLTKLGDNGFIHFATDWENYAEHMLEVLRQFDKELRNTSATNDFIPRPDFRPLTKFEERAHRLGHGVWDLYFVKQA.

Residues E79, E104, D131, and D154 each coordinate S-adenosyl-L-methionine. Residue D154 is part of the active site. Residues K158, D190, and 228-231 each bind substrate; that span reads TKFE.

This sequence belongs to the class I-like SAM-binding methyltransferase superfamily. TrmB family.

It carries out the reaction guanosine(46) in tRNA + S-adenosyl-L-methionine = N(7)-methylguanosine(46) in tRNA + S-adenosyl-L-homocysteine. It participates in tRNA modification; N(7)-methylguanine-tRNA biosynthesis. Functionally, catalyzes the formation of N(7)-methylguanine at position 46 (m7G46) in tRNA. This chain is tRNA (guanine-N(7)-)-methyltransferase, found in Actinobacillus pleuropneumoniae serotype 5b (strain L20).